A 202-amino-acid polypeptide reads, in one-letter code: ERFAPRYIELVIVADHSVATKYNDNVTAILSWVHQLVNNIILFYRDLNVHFTLSAVEVWSNGDLINVQPEATVTLNLFGEWRERDLLNRRMHDNAQLLNNVALDDNTIGLAYDEGMCDPKYSVGIVKDHSAINRMVAATMAHEIGHNLGMNHDGSQCNCGGNGCVMSAVLMQQHSYQFSDCSKDEYQRYLTNHNPQCILNQP.

The Peptidase M12B domain maps to 6 to 202 (RYIELVIVAD…HNPQCILNQP (197 aa)). Glu9 provides a ligand contact to Ca(2+). An N-linked (GlcNAc...) asparagine glycan is attached at Asn25. Position 93 (Asp93) interacts with Ca(2+). 3 cysteine pairs are disulfide-bonded: Cys117–Cys197, Cys157–Cys181, and Cys159–Cys164. Position 142 (His142) interacts with Zn(2+). Glu143 is a catalytic residue. Zn(2+) is bound by residues His146 and His152. Ca(2+)-binding residues include Cys197 and Asn200.

Belongs to the venom metalloproteinase (M12B) family. P-I subfamily. As to quaternary structure, monomer. Zn(2+) serves as cofactor. In terms of processing, glycosylated. In terms of tissue distribution, expressed by the venom gland.

It is found in the secreted. It catalyses the reaction Hydrolysis of 14-Ala-|-Leu-15 in insulin B chain and 413-Lys-|-Leu-414 in alpha-chain of fibrinogen.. With respect to regulation, activated by calcium and magnesium ions. Inhibited by EDTA, DTT and L-cysteine. Activity is not affected by PMSF or heparin. In terms of biological role, has fibrino(geno)lytic activity on the alpha and beta chains of fibrinogen (FGA and FGB). Inhibits human ADP- and collagen-induced platelet aggregation on platelet-rich plasma but does not affect the thrombin-induced aggregation of rabbit washed platelets. Slightly degrades plasminogen. This Macrovipera lebetinus (Levantine viper) protein is Snake venom metalloproteinase fibrolase.